The chain runs to 481 residues: MKFMKLGTKPDSFLSKGDNVRYVTNELETEIIIIIGNVKFYLHKFPLLSKSGFLQKHIATSKNEEEKKNQIDEIDISEIPGGSVAFEICVKFCYGITVTLNAYNVVAVRCAAEFLEMNETFEKSNLVYKIDVFLNSTIFRSWKDSIIVLQTTKDLLSDDSEELVKRCLGSIASTASIDTSKVKWSYTYNRKKKLEKVRKPEDGVPKDWWVEDLCELHIDLYKQAIKAIKNRGKVPSNVIGEALHAYAIRRIAGFSKESMQLIDRSLINTIIELLPDEKGNISSSFLTKLHRASIFLGCEETVKEKLKKRVSEQLEETTVNDILMYDLDMVQSLVKEFMNRDPKTHSKVSVAKLIDGYLAEKSRDPNLPLQNFLSLAETLSSFPRHSHDVLYRAIDMFLKEHSGISKSEKKRVCGLMDCRKLSAEACEHAVQNERLPMRVIVQVLFFEQIRANGSSTGYSTPELTTTTLNTEDDEWDHEKEF.

Residues 29 to 102 form the BTB domain; sequence TEIIIIIGNV…CYGITVTLNA (74 aa). In terms of domain architecture, NPH3 spans 207 to 450; it reads DWWVEDLCEL…VQVLFFEQIR (244 aa). Tyrosine 391 carries the phosphotyrosine modification. Residues 456-481 are disordered; the sequence is TGYSTPELTTTTLNTEDDEWDHEKEF. The segment covering 460–469 has biased composition (low complexity); it reads TPELTTTTLN.

It belongs to the NPH3 family. In terms of tissue distribution, expressed in the hypocotyl cells that would differentiate into vascular bundles. Highly expressed in primary root tips and radicles.

The protein localises to the cell membrane. It localises to the cytoplasm. Its subcellular location is the cytosol. It functions in the pathway protein modification; protein ubiquitination. May act as a substrate-specific adapter of an E3 ubiquitin-protein ligase complex (CUL3-RBX1-BTB) which mediates the ubiquitination and subsequent proteasomal degradation of target proteins. Plays an essential role in auxin-mediated organogenesis and in root gravitropic responses through the control of PIN proteins (e.g. PIN1 and PIN2) polarity in the root tip endodermal cell layer and in shoot epidermis. Recruited to the plasma membrane by PINs (e.g. PIN1 and PIN2) and, in concert with AGC kinases-mediated (e.g. D6PK and PID) PINs phosphorylation, maintains their polarity through limiting lateral diffusion-based escape. The protein is Phototropic-responsive NPH3 family protein NPY4 of Arabidopsis thaliana (Mouse-ear cress).